A 388-amino-acid chain; its full sequence is Ovalbumin-related protein Y (388 aa).

Cys-74 and Cys-121 are joined by a disulfide. Asn-95, Asn-215, Asn-293, and Asn-312 each carry an N-linked (GlcNAc...) asparagine glycan.

Belongs to the serpin family. Ov-serpin subfamily. N-glycosylated on at least two Asn residues by ovomucoid type carbohydrate units. Post-translationally, the N-terminus is blocked. As to expression, major protein of egg white. Expressed in the magnum of the oviduct (at protein level).

Its subcellular location is the secreted. The protein is Ovalbumin-related protein Y (SERPINB14B) of Gallus gallus (Chicken).